The following is a 718-amino-acid chain: GMP synthase [glutamine-hydrolyzing] (718 aa).

Positions V43–N247 constitute a Glutamine amidotransferase type-1 domain. Residues C128, H221, and E223 each act as for GATase activity in the active site. One can recognise a GMPS ATP-PPase domain in the interval Y248–R457. Residue S275–T281 coordinates ATP.

As to quaternary structure, homodimer.

It carries out the reaction XMP + L-glutamine + ATP + H2O = GMP + L-glutamate + AMP + diphosphate + 2 H(+). The protein operates within purine metabolism; GMP biosynthesis; GMP from XMP (L-Gln route): step 1/1. This chain is GMP synthase [glutamine-hydrolyzing] (guaA), found in Dictyostelium discoideum (Social amoeba).